The sequence spans 233 residues: Large ribosomal subunit protein uL1 (233 aa).

It belongs to the universal ribosomal protein uL1 family. As to quaternary structure, part of the 50S ribosomal subunit.

Functionally, binds directly to 23S rRNA. The L1 stalk is quite mobile in the ribosome, and is involved in E site tRNA release. Protein L1 is also a translational repressor protein, it controls the translation of the L11 operon by binding to its mRNA. This chain is Large ribosomal subunit protein uL1, found in Vibrio cholerae serotype O1 (strain ATCC 39315 / El Tor Inaba N16961).